Here is a 410-residue protein sequence, read N- to C-terminus: Elongation factor Tu, chloroplastic (410 aa).

The region spanning 10–214 (KPHINIGTIG…QVDKYIPTPQ (205 aa)) is the tr-type G domain. A G1 region spans residues 19-26 (GHVDHGKT). 19 to 26 (GHVDHGKT) serves as a coordination point for GTP. Thr26 contacts Mg(2+). The interval 60–64 (GITIN) is G2. The interval 81–84 (DCPG) is G3. Residues 81–85 (DCPGH) and 136–139 (NKED) contribute to the GTP site. The interval 136-139 (NKED) is G4. A G5 region spans residues 174 to 176 (SAL).

The protein belongs to the TRAFAC class translation factor GTPase superfamily. Classic translation factor GTPase family. EF-Tu/EF-1A subfamily.

The protein resides in the plastid. It is found in the chloroplast. It carries out the reaction GTP + H2O = GDP + phosphate + H(+). GTP hydrolase that promotes the GTP-dependent binding of aminoacyl-tRNA to the A-site of ribosomes during protein biosynthesis. The chain is Elongation factor Tu, chloroplastic (tufA) from Mesostigma viride (Green alga).